We begin with the raw amino-acid sequence, 573 residues long: Urease subunit alpha 2 (573 aa).

The 439-residue stretch at Gly-135 to Ser-573 folds into the Urease domain. Residues His-140, His-142, and Lys-223 each contribute to the Ni(2+) site. Lys-223 carries the N6-carboxylysine modification. His-225 contributes to the substrate binding site. Residues His-252 and His-278 each coordinate Ni(2+). Residue His-326 is the Proton donor of the active site. Asp-366 lines the Ni(2+) pocket.

It belongs to the metallo-dependent hydrolases superfamily. Urease alpha subunit family. As to quaternary structure, heterotrimer of UreA (gamma), UreB (beta) and UreC (alpha) subunits. Three heterotrimers associate to form the active enzyme. The cofactor is Ni cation. In terms of processing, carboxylation allows a single lysine to coordinate two nickel ions.

The protein resides in the cytoplasm. It catalyses the reaction urea + 2 H2O + H(+) = hydrogencarbonate + 2 NH4(+). Its pathway is nitrogen metabolism; urea degradation; CO(2) and NH(3) from urea (urease route): step 1/1. In terms of biological role, disrupting the ure2 operon has no effect on urease activity, or pathogen survival in BALB/c mice when inoculated by gavage, but confers slightly enhanced resistance to low pH killing in vitro. In Brucella suis biovar 1 (strain 1330), this protein is Urease subunit alpha 2.